The following is a 501-amino-acid chain: MVLGLLAFIWLMRAWRQSLKIWVDVPSIGKDGILGQWITALQWQQKARSLIQEGYEKHGHYAFKIATPSRWEIFICNEKMIKEYKNLMDDKFSANAVTADMFQTKWTAPGAAEGVHKIPIPLLAKALTWQRNRSSVTGDTYFKEFVTEFLHAWEVETKITSEGPYEFCCFETGTRIVAHLTAKSLVGHPLCRDPEIIDLFAGYGNAVPSSGFLIAMFPGILKPLVAKFCEAPKMSDRLDRIFLSEMKERQLQTGSDASDIMSWLWHWTQENEPGKYSEVDIVRSITSAVFGAIHTTTQVLVHCLFELATRPEYVEPLRQEVQQAVENHGGWEKEGIESMLKLDSFIKECQRFNPLDSGSLARCATNDFTFSNGLKVAKGTYVFAPNAPVLFDERFYPNPHQFDGYRFYRLGQQTGKPQGFRFVATNSNYLQFGDGRHTCPGRYMAADEIRLMLGHILLHYDITTKENEGRPKNWFFKKILFPDMKGVIVLKKRAEVRAVNK.

Residues 1–16 (MVLGLLAFIWLMRAWR) form a helical membrane-spanning segment. Asparagine 132 is a glycosylation site (N-linked (GlcNAc...) asparagine). Cysteine 439 is a binding site for heme.

The protein belongs to the cytochrome P450 family. Heme is required as a cofactor.

The protein localises to the membrane. Its pathway is secondary metabolite biosynthesis. Cytochrome P450 monooxygenase; part of the gene cluster that mediates the biosynthesis of the indole diterpenes janthitremanes such as shearinine K or shearinine A. The geranylgeranyl diphosphate (GGPP) synthase janG catalyzes the first step in janthitremane biosynthesis via conversion of farnesyl pyrophosphate and isopentyl pyrophosphate into geranylgeranyl pyrophosphate (GGPP). Condensation of indole-3-glycerol phosphate with GGPP by the prenyl transferase janC then forms 3-geranylgeranylindole (3-GGI). Epoxidation by the FAD-dependent monooxygenase janM leads to a epoxidized-GGI that is substrate of the terpene cyclase janB for cyclization to yield paspaline. Paspaline is subsequently converted to 13-desoxypaspaline by the cytochrome P450 monooxygenase janP, via beta-PC-M6 in a series of alpha-face oxidations. The cytochrome P450 monooxygenase janQ is proposed to carry out sequential beta-face oxidation steps at C-7 and C-13 of 13-desoxypaspaline to form paspalicine and paspalinine respectively. The indole diterpene prenyltransferase janD may then convert paspalinine into shearinine K which is substrate of janO and/or additional enzymes for oxidation and cyclization to generate shearinine A. This chain is Cytochrome P450 monooxygenase janQ, found in Penicillium janthinellum (Penicillium vitale).